A 232-amino-acid polypeptide reads, in one-letter code: Large ribosomal subunit protein uL1 (232 aa).

This sequence belongs to the universal ribosomal protein uL1 family. As to quaternary structure, part of the 50S ribosomal subunit.

In terms of biological role, binds directly to 23S rRNA. The L1 stalk is quite mobile in the ribosome, and is involved in E site tRNA release. Its function is as follows. Protein L1 is also a translational repressor protein, it controls the translation of the L11 operon by binding to its mRNA. The chain is Large ribosomal subunit protein uL1 from Chelativorans sp. (strain BNC1).